The following is a 206-amino-acid chain: Ras-related protein Rab-18 (206 aa).

An N-acetylmethionine modification is found at Met-1. Residues Ser-17, Gly-20, Lys-21, Ser-22, Ser-23, Asp-34, Pro-35, Thr-40, Gly-66, Lys-123, and Asp-125 each coordinate GTP. Residue Ser-22 participates in Mg(2+) binding. 2 short sequence motifs (switch) span residues 31–45 (DTFDPELAATIGVDF) and 63–80 (DTAGQERFRTLTPSYYRG). Thr-40 is a Mg(2+) binding site. Ser-144 bears the Phosphoserine mark. Position 152 (Ala-152) interacts with GTP. A lipid anchor (S-palmitoyl cysteine) is attached at Cys-199. A Cysteine methyl ester modification is found at Cys-203. Cys-203 carries the S-geranylgeranyl cysteine lipid modification. The propeptide at 204 to 206 (SVL) is removed in mature form.

It belongs to the small GTPase superfamily. Rab family. As to quaternary structure, interacts (in GTP-bound form) with ZFYVE1. Interacts with ZW10 and this interaction is enhanced in the presence of ZFYVE1. Interacts with BSCL2. The cofactor is Mg(2+).

The protein localises to the endoplasmic reticulum membrane. It is found in the golgi apparatus. It localises to the cis-Golgi network membrane. The protein resides in the lipid droplet. Its subcellular location is the apical cell membrane. It carries out the reaction GTP + H2O = GDP + phosphate + H(+). With respect to regulation, regulated by guanine nucleotide exchange factors (GEFs) which promote the exchange of bound GDP for free GTP. Regulated by GTPase activating proteins (GAPs) which increase the GTP hydrolysis activity at the ER membrane. Inhibited by GDP dissociation inhibitors (GDIs) which prevent Rab-GDP dissociation. In terms of biological role, the small GTPases Rab are key regulators of intracellular membrane trafficking, from the formation of transport vesicles to their fusion with membranes. Rabs cycle between an inactive GDP-bound form and an active GTP-bound form that is able to recruit to membranes different sets of downstream effectors directly responsible for vesicle formation, movement, tethering and fusion. RAB18 is required for the localization of ZFYVE1 to lipid droplets and for its function in mediating the formation of endoplasmic reticulum-lipid droplets (ER-LD) contacts. Also required for maintaining endoplasmic reticulum structure. Plays a role in apical endocytosis/recycling. Plays a key role in eye and brain development and neurodegeneration. The polypeptide is Ras-related protein Rab-18 (Rattus norvegicus (Rat)).